Consider the following 257-residue polypeptide: Imidazole glycerol phosphate synthase subunit HisF (257 aa).

Active-site residues include D11 and D130.

It belongs to the HisA/HisF family. In terms of assembly, heterodimer of HisH and HisF.

The protein localises to the cytoplasm. It catalyses the reaction 5-[(5-phospho-1-deoxy-D-ribulos-1-ylimino)methylamino]-1-(5-phospho-beta-D-ribosyl)imidazole-4-carboxamide + L-glutamine = D-erythro-1-(imidazol-4-yl)glycerol 3-phosphate + 5-amino-1-(5-phospho-beta-D-ribosyl)imidazole-4-carboxamide + L-glutamate + H(+). It participates in amino-acid biosynthesis; L-histidine biosynthesis; L-histidine from 5-phospho-alpha-D-ribose 1-diphosphate: step 5/9. IGPS catalyzes the conversion of PRFAR and glutamine to IGP, AICAR and glutamate. The HisF subunit catalyzes the cyclization activity that produces IGP and AICAR from PRFAR using the ammonia provided by the HisH subunit. The protein is Imidazole glycerol phosphate synthase subunit HisF of Vibrio parahaemolyticus serotype O3:K6 (strain RIMD 2210633).